A 1634-amino-acid chain; its full sequence is Phosphatidylinositol 4-phosphate 3-kinase C2 domain-containing subunit beta (1634 aa).

The segment at 2 to 298 (SSTQGNGEHW…YASRYGNRKN (297 aa)) is interaction with GRB2. Disordered regions lie at residues 45-188 (EENR…QPSD) and 259-315 (GRGP…VGSR). A compositionally biased stretch (polar residues) spans 87–112 (SDPTLNYNSLSPQEGPPNHSTSQGPQ). Residues 176–187 (GSPSSSKISQPS) are compositionally biased toward low complexity. Positions 259–270 (GRGPLDFSKDTS) are enriched in basic and acidic residues. Positions 375–463 (EVNLKVTVLC…DIDIRLQLME (89 aa)) constitute a PI3K-RBD domain. The region spanning 635–786 (VYATHRIPII…DSVILQIDFP (152 aa)) is the C2 PI3K-type domain. The PIK helical domain occupies 805 to 981 (RYEFGSLREE…QYLLAALLCC (177 aa)). The region spanning 1050–1328 (VPRDCSYFNS…LIESSLGSVA (279 aa)) is the PI3K/PI4K catalytic domain. The segment at 1056–1062 (YFNSNAV) is G-loop. The tract at residues 1192–1200 (GICDRHNDN) is catalytic loop. Residues 1211–1237 (HIDFGRFLGHAQMFGNIKRDRAPFVFT) are activation loop. The PX domain occupies 1365-1481 (GRISDVFLCR…TFFHPLPRDE (117 aa)). The region spanning 1504 to 1624 (VGGEVKLSIS…DLAQEKTGWF (121 aa)) is the C2 domain.

Belongs to the PI3/PI4-kinase family. As to quaternary structure, part of a complex with ERBB2 and EGFR. Part of a complex with phosphorylated EGFR and GRB2. Interacts with phosphorylated EGFR and PDGFR, maybe indirectly. Interacts with GRB2. It depends on Ca(2+) as a cofactor. The cofactor is Mg(2+). Mn(2+) serves as cofactor. Expressed in columnar and transitional epithelia, mononuclear cells, and ganglion cells (at protein level). Widely expressed, with highest levels in thymus and placenta and lowest in peripheral blood, skeletal muscle and kidney.

It localises to the microsome. It is found in the cell membrane. Its subcellular location is the cytoplasm. The protein resides in the cytosol. The protein localises to the nucleus. It localises to the endoplasmic reticulum. It carries out the reaction a 1,2-diacyl-sn-glycero-3-phospho-(1D-myo-inositol 4-phosphate) + ATP = a 1,2-diacyl-sn-glycero-3-phospho-(1D-myo-inositol-3,4-bisphosphate) + ADP + H(+). The catalysed reaction is a 1,2-diacyl-sn-glycero-3-phospho-(1D-myo-inositol) + ATP = a 1,2-diacyl-sn-glycero-3-phospho-(1D-myo-inositol-3-phosphate) + ADP + H(+). Its activity is regulated as follows. Activated by GRB2. Functionally, phosphorylates PtdIns and PtdIns4P with a preference for PtdIns. Does not phosphorylate PtdIns(4,5)P2. May be involved in EGF and PDGF signaling cascades. This chain is Phosphatidylinositol 4-phosphate 3-kinase C2 domain-containing subunit beta (PIK3C2B), found in Homo sapiens (Human).